The sequence spans 298 residues: NAD kinase (298 aa).

Catalysis depends on Asp80, which acts as the Proton acceptor. Residues 80–81 (DG), 154–155 (ND), Arg182, Asp184, 195–200 (TAYALS), Ala219, and Gln253 contribute to the NAD(+) site.

This sequence belongs to the NAD kinase family. The cofactor is a divalent metal cation.

Its subcellular location is the cytoplasm. The enzyme catalyses NAD(+) + ATP = ADP + NADP(+) + H(+). In terms of biological role, involved in the regulation of the intracellular balance of NAD and NADP, and is a key enzyme in the biosynthesis of NADP. Catalyzes specifically the phosphorylation on 2'-hydroxyl of the adenosine moiety of NAD to yield NADP. The sequence is that of NAD kinase from Acidovorax sp. (strain JS42).